The chain runs to 532 residues: Putative cysteine ligase BshC (532 aa).

Residues 431–451 (MAQAKDALAKVDASLVEAAER) are a coiled coil.

This sequence belongs to the BshC family.

The protein is Putative cysteine ligase BshC of Koribacter versatilis (strain Ellin345).